The chain runs to 230 residues: Phosphoribosylformylglycinamidine synthase subunit PurQ (230 aa).

The 228-residue stretch at 3–230 (SAIIVFPGTN…LFQSIVESLS (228 aa)) folds into the Glutamine amidotransferase type-1 domain. Cys87 serves as the catalytic Nucleophile. Active-site residues include His204 and Glu206.

As to quaternary structure, part of the FGAM synthase complex composed of 1 PurL, 1 PurQ and 2 PurS subunits.

The protein resides in the cytoplasm. The catalysed reaction is N(2)-formyl-N(1)-(5-phospho-beta-D-ribosyl)glycinamide + L-glutamine + ATP + H2O = 2-formamido-N(1)-(5-O-phospho-beta-D-ribosyl)acetamidine + L-glutamate + ADP + phosphate + H(+). It catalyses the reaction L-glutamine + H2O = L-glutamate + NH4(+). Its pathway is purine metabolism; IMP biosynthesis via de novo pathway; 5-amino-1-(5-phospho-D-ribosyl)imidazole from N(2)-formyl-N(1)-(5-phospho-D-ribosyl)glycinamide: step 1/2. Part of the phosphoribosylformylglycinamidine synthase complex involved in the purines biosynthetic pathway. Catalyzes the ATP-dependent conversion of formylglycinamide ribonucleotide (FGAR) and glutamine to yield formylglycinamidine ribonucleotide (FGAM) and glutamate. The FGAM synthase complex is composed of three subunits. PurQ produces an ammonia molecule by converting glutamine to glutamate. PurL transfers the ammonia molecule to FGAR to form FGAM in an ATP-dependent manner. PurS interacts with PurQ and PurL and is thought to assist in the transfer of the ammonia molecule from PurQ to PurL. The sequence is that of Phosphoribosylformylglycinamidine synthase subunit PurQ from Rhodospirillum rubrum (strain ATCC 11170 / ATH 1.1.1 / DSM 467 / LMG 4362 / NCIMB 8255 / S1).